Here is a 436-residue protein sequence, read N- to C-terminus: Serine--tRNA ligase (436 aa).

242 to 244 (TAE) serves as a coordination point for L-serine. 273-275 (RSE) contacts ATP. Residue E296 participates in L-serine binding. 360–363 (EISS) contacts ATP. S395 contributes to the L-serine binding site.

It belongs to the class-II aminoacyl-tRNA synthetase family. Type-1 seryl-tRNA synthetase subfamily. In terms of assembly, homodimer. The tRNA molecule binds across the dimer.

It localises to the cytoplasm. It carries out the reaction tRNA(Ser) + L-serine + ATP = L-seryl-tRNA(Ser) + AMP + diphosphate + H(+). The catalysed reaction is tRNA(Sec) + L-serine + ATP = L-seryl-tRNA(Sec) + AMP + diphosphate + H(+). It participates in aminoacyl-tRNA biosynthesis; selenocysteinyl-tRNA(Sec) biosynthesis; L-seryl-tRNA(Sec) from L-serine and tRNA(Sec): step 1/1. Its function is as follows. Catalyzes the attachment of serine to tRNA(Ser). Is also able to aminoacylate tRNA(Sec) with serine, to form the misacylated tRNA L-seryl-tRNA(Sec), which will be further converted into selenocysteinyl-tRNA(Sec). This is Serine--tRNA ligase from Polynucleobacter necessarius subsp. necessarius (strain STIR1).